A 412-amino-acid chain; its full sequence is D-xylonate dehydratase (412 aa).

Homooctamer.

The catalysed reaction is D-xylonate = 2-dehydro-3-deoxy-D-arabinonate + H2O. Functionally, NADP-dependent D-xylose dehydrogenase involved in the degradation of D-xylose, a major component of hemicelluloses such as xylan. Catalyzes the third reaction in the xylose utilization pathway through dehydratation of D-xylonate into 2-dehydro-3-deoxy-D-xylonate. In Haloferax volcanii (strain ATCC 29605 / DSM 3757 / JCM 8879 / NBRC 14742 / NCIMB 2012 / VKM B-1768 / DS2) (Halobacterium volcanii), this protein is D-xylonate dehydratase.